Reading from the N-terminus, the 631-residue chain is Phosphomethylpyrimidine synthase (631 aa).

Substrate is bound by residues asparagine 231, methionine 260, tyrosine 289, histidine 325, 345-347, 386-389, and glutamate 425; these read SRG and DGLR. Histidine 429 is a Zn(2+) binding site. A substrate-binding site is contributed by tyrosine 452. Histidine 493 serves as a coordination point for Zn(2+). [4Fe-4S] cluster contacts are provided by cysteine 573, cysteine 576, and cysteine 581.

It belongs to the ThiC family. As to quaternary structure, homodimer. [4Fe-4S] cluster serves as cofactor.

The catalysed reaction is 5-amino-1-(5-phospho-beta-D-ribosyl)imidazole + S-adenosyl-L-methionine = 4-amino-2-methyl-5-(phosphooxymethyl)pyrimidine + CO + 5'-deoxyadenosine + formate + L-methionine + 3 H(+). It functions in the pathway cofactor biosynthesis; thiamine diphosphate biosynthesis. Catalyzes the synthesis of the hydroxymethylpyrimidine phosphate (HMP-P) moiety of thiamine from aminoimidazole ribotide (AIR) in a radical S-adenosyl-L-methionine (SAM)-dependent reaction. This is Phosphomethylpyrimidine synthase from Acinetobacter baylyi (strain ATCC 33305 / BD413 / ADP1).